The following is a 364-amino-acid chain: Developmentally-regulated GTP-binding protein 2 (364 aa).

K21 carries the post-translational modification (3S)-3-hydroxylysine. Residues A63 to A288 enclose the OBG-type G domain. GTP-binding positions include G69–S76, F94–T98, D115–G118, N246–D249, and S269–G271. Mg(2+) is bound by residues S76 and T96. In terms of domain architecture, TGS spans A288 to K363.

It belongs to the TRAFAC class OBG-HflX-like GTPase superfamily. OBG GTPase family. As to quaternary structure, interacts with RWDD1; this interaction confers protection to polyubiquitination and proteolytic degradation. Interacts with JMJD7; this interaction is direct. Mg(2+) serves as cofactor. Polyubiquitinated. In terms of processing, hydroxylated (with S stereochemistry) at C-3 of Lys-21 by JMJD7.

Its subcellular location is the nucleus. The protein resides in the cytoplasm. The catalysed reaction is GTP + H2O = GDP + phosphate + H(+). In terms of biological role, catalyzes the conversion of GTP to GDP through hydrolysis of the gamma-phosphate bond in GTP. When hydroxylated at C-3 of 'Lys-21' by JMJD7, may bind to RNA and play a role in translation. In Bos taurus (Bovine), this protein is Developmentally-regulated GTP-binding protein 2 (DRG2).